The following is a 230-amino-acid chain: Cytochrome c oxidase subunit 2 (230 aa).

At 1 to 14 the chain is on the mitochondrial intermembrane side; it reads MAHPSQLGFQDAAS. The chain crosses the membrane as a helical span at residues 15–45; it reads PVMEELLHFHDHALMIVLLISTLVLYIIVAM. The Mitochondrial matrix portion of the chain corresponds to 46–59; sequence VSTKLTNMYILDSQ. Residues 60-87 traverse the membrane as a helical segment; it reads EIEIVWTVLPAVILILIALPSLRILYLM. The Mitochondrial intermembrane segment spans residues 88–230; sequence DEINDPHLTI…KWSTMMLEDA (143 aa). Positions 161, 196, 198, 200, 204, and 207 each coordinate Cu cation. Residue E198 participates in Mg(2+) binding.

Belongs to the cytochrome c oxidase subunit 2 family. As to quaternary structure, component of the cytochrome c oxidase (complex IV, CIV), a multisubunit enzyme composed of 14 subunits. The complex is composed of a catalytic core of 3 subunits MT-CO1, MT-CO2 and MT-CO3, encoded in the mitochondrial DNA, and 11 supernumerary subunits COX4I, COX5A, COX5B, COX6A, COX6B, COX6C, COX7A, COX7B, COX7C, COX8 and NDUFA4, which are encoded in the nuclear genome. The complex exists as a monomer or a dimer and forms supercomplexes (SCs) in the inner mitochondrial membrane with NADH-ubiquinone oxidoreductase (complex I, CI) and ubiquinol-cytochrome c oxidoreductase (cytochrome b-c1 complex, complex III, CIII), resulting in different assemblies (supercomplex SCI(1)III(2)IV(1) and megacomplex MCI(2)III(2)IV(2)). Found in a complex with TMEM177, COA6, COX18, COX20, SCO1 and SCO2. Interacts with TMEM177 in a COX20-dependent manner. Interacts with COX20. Interacts with COX16. Cu cation serves as cofactor.

Its subcellular location is the mitochondrion inner membrane. It carries out the reaction 4 Fe(II)-[cytochrome c] + O2 + 8 H(+)(in) = 4 Fe(III)-[cytochrome c] + 2 H2O + 4 H(+)(out). Component of the cytochrome c oxidase, the last enzyme in the mitochondrial electron transport chain which drives oxidative phosphorylation. The respiratory chain contains 3 multisubunit complexes succinate dehydrogenase (complex II, CII), ubiquinol-cytochrome c oxidoreductase (cytochrome b-c1 complex, complex III, CIII) and cytochrome c oxidase (complex IV, CIV), that cooperate to transfer electrons derived from NADH and succinate to molecular oxygen, creating an electrochemical gradient over the inner membrane that drives transmembrane transport and the ATP synthase. Cytochrome c oxidase is the component of the respiratory chain that catalyzes the reduction of oxygen to water. Electrons originating from reduced cytochrome c in the intermembrane space (IMS) are transferred via the dinuclear copper A center (CU(A)) of subunit 2 and heme A of subunit 1 to the active site in subunit 1, a binuclear center (BNC) formed by heme A3 and copper B (CU(B)). The BNC reduces molecular oxygen to 2 water molecules using 4 electrons from cytochrome c in the IMS and 4 protons from the mitochondrial matrix. The polypeptide is Cytochrome c oxidase subunit 2 (mt-co2) (Oncorhynchus mykiss (Rainbow trout)).